The following is a 217-amino-acid chain: Large ribosomal subunit protein uL1 (217 aa).

The protein belongs to the universal ribosomal protein uL1 family.

The chain is Large ribosomal subunit protein uL1 (RpL10Ab) from Drosophila melanogaster (Fruit fly).